Reading from the N-terminus, the 360-residue chain is MPKKILFTGGGTVGHVTLNLILIPKFIKDGWEVHYIGDKNGIEHTEIEKSGLDVTFHAIATGKLRRYFSWQNLADVFKVALGLLQSLFILAKLRPQALFSKGGFVSVPPVVAAKLLGKPVFIHESDRSMGLANKIAYKFATTMYTTFEQEDQLSKVKHLGAVTKVFKDANQMPESTQLEAVKEYFSRDLKTLLFIGGSAGAHVFNQFISDHPELKQRYNIINITGDPHLNELSSHLYRVDYVTDLYQPLIAMADLVVTRGGSNTLFELLAMAKLHLIVPLGKEASRGDQLENATYFEKRGYAKQLQEPDLTLHNFDQAMADLFEHQADYEATMLATKEIQSPDFFYDLLRADISSAIKEK.

Residues Ser198 and Gln289 each contribute to the UDP-N-acetyl-alpha-D-glucosamine site.

This sequence belongs to the glycosyltransferase 28 family. MurG subfamily.

Its subcellular location is the cell membrane. The enzyme catalyses Mur2Ac(oyl-L-Ala-gamma-D-Glu-L-Lys-D-Ala-D-Ala)-di-trans,octa-cis-undecaprenyl diphosphate + UDP-N-acetyl-alpha-D-glucosamine = beta-D-GlcNAc-(1-&gt;4)-Mur2Ac(oyl-L-Ala-gamma-D-Glu-L-Lys-D-Ala-D-Ala)-di-trans,octa-cis-undecaprenyl diphosphate + UDP + H(+). Its pathway is cell wall biogenesis; peptidoglycan biosynthesis. In terms of biological role, cell wall formation. Catalyzes the transfer of a GlcNAc subunit on undecaprenyl-pyrophosphoryl-MurNAc-pentapeptide (lipid intermediate I) to form undecaprenyl-pyrophosphoryl-MurNAc-(pentapeptide)GlcNAc (lipid intermediate II). In Streptococcus pyogenes serotype M49 (strain NZ131), this protein is UDP-N-acetylglucosamine--N-acetylmuramyl-(pentapeptide) pyrophosphoryl-undecaprenol N-acetylglucosamine transferase.